The primary structure comprises 851 residues: Protein translocase subunit SecA (851 aa).

ATP-binding positions include Q88, G106–T110, and D496. Residues C828, C830, C839, and H840 each coordinate Zn(2+).

The protein belongs to the SecA family. In terms of assembly, monomer and homodimer. Part of the essential Sec protein translocation apparatus which comprises SecA, SecYEG and auxiliary proteins SecDF-YajC and YidC. Zn(2+) serves as cofactor.

Its subcellular location is the cell inner membrane. It localises to the cytoplasm. It carries out the reaction ATP + H2O + cellular proteinSide 1 = ADP + phosphate + cellular proteinSide 2.. Its function is as follows. Part of the Sec protein translocase complex. Interacts with the SecYEG preprotein conducting channel. Has a central role in coupling the hydrolysis of ATP to the transfer of proteins into and across the cell membrane, serving as an ATP-driven molecular motor driving the stepwise translocation of polypeptide chains across the membrane. The sequence is that of Protein translocase subunit SecA from Helicobacter hepaticus (strain ATCC 51449 / 3B1).